Reading from the N-terminus, the 196-residue chain is Small ribosomal subunit protein uS4c (196 aa).

In terms of domain architecture, S4 RNA-binding spans 89 to 169 (MRLDNIIFRL…LPKHLTIDTV (81 aa)).

This sequence belongs to the universal ribosomal protein uS4 family. In terms of assembly, part of the 30S ribosomal subunit. Contacts protein S5. The interaction surface between S4 and S5 is involved in control of translational fidelity.

The protein resides in the plastid. The protein localises to the chloroplast. One of the primary rRNA binding proteins, it binds directly to 16S rRNA where it nucleates assembly of the body of the 30S subunit. Functionally, with S5 and S12 plays an important role in translational accuracy. This chain is Small ribosomal subunit protein uS4c (rps4), found in Stipellula capensis (Cape rice grass).